The primary structure comprises 408 residues: MRGGGLWQLGQSVTRRLAQAEKKVIARRCFASEADLKKTALYDFHVANGGKMVPFAGWSMPIQYKDSIMDSTINCRENGSLFDVAHMCGLSLKGKDCIPFLEKLVVGDIAGLAPGTGTLSVLTNEKGGAIDDTVITKVTDDHIYLVVNAGCREKDLAHIEEHMKAFKAKGGDVSWHIHDERSLLALQGPLAAPVLQHLTKEDLSKFYFGQFTFLDINGFPCYLTRTGYTGEDGFEISVPNEYAVDLAKAMLEKSEGKVRLTGRGARDSLRLEAGLCLYGNDLEQHITPIEAGLTWAVGKRRRAEGGFLGAEVILKQIADGPPQRRVGFISSGPPARGHSEIQNEKGESIGEITSGGFSPCLKKNIAMGYVKSGNHKAGTKVNILVRGKPYEGVVTKMPFVPTKYYKSP.

A mitochondrion-targeting transit peptide spans 1–30; that stretch reads MRGGGLWQLGQSVTRRLAQAEKKVIARRCF. Residues Glu235, Arg266, and Tyr404 each contribute to the substrate site.

This sequence belongs to the GcvT family. In terms of assembly, the glycine cleavage system is composed of four proteins: P, T, L and H.

It localises to the mitochondrion. The catalysed reaction is N(6)-[(R)-S(8)-aminomethyldihydrolipoyl]-L-lysyl-[protein] + (6S)-5,6,7,8-tetrahydrofolate = N(6)-[(R)-dihydrolipoyl]-L-lysyl-[protein] + (6R)-5,10-methylene-5,6,7,8-tetrahydrofolate + NH4(+). Functionally, the glycine cleavage system catalyzes the degradation of glycine. This is Aminomethyltransferase, mitochondrial (GDCST) from Mesembryanthemum crystallinum (Common ice plant).